The sequence spans 86 residues: RNA-binding protein Hfq (86 aa).

The region spanning 9 to 68 (DPYLNTLRKEKVPVSIYLVNGIKLQGSIESFDQFVVLLKNTVSQMVYKHAISTVVPARPV) is the Sm domain. The tract at residues 66 to 86 (RPVRLPSPSDSEHGDSEPGNA) is disordered. The span at 75-86 (DSEHGDSEPGNA) shows a compositional bias: basic and acidic residues.

Belongs to the Hfq family. Homohexamer.

In terms of biological role, RNA chaperone that binds small regulatory RNA (sRNAs) and mRNAs to facilitate mRNA translational regulation in response to envelope stress, environmental stress and changes in metabolite concentrations. Also binds with high specificity to tRNAs. In Pseudomonas putida (strain W619), this protein is RNA-binding protein Hfq.